The sequence spans 177 residues: Large ribosomal subunit protein uL10 (177 aa).

The protein belongs to the universal ribosomal protein uL10 family. Part of the ribosomal stalk of the 50S ribosomal subunit. The N-terminus interacts with L11 and the large rRNA to form the base of the stalk. The C-terminus forms an elongated spine to which L12 dimers bind in a sequential fashion forming a multimeric L10(L12)X complex.

Its function is as follows. Forms part of the ribosomal stalk, playing a central role in the interaction of the ribosome with GTP-bound translation factors. This is Large ribosomal subunit protein uL10 from Kocuria rhizophila (strain ATCC 9341 / DSM 348 / NBRC 103217 / DC2201).